The following is a 156-amino-acid chain: 6,7-dimethyl-8-ribityllumazine synthase (156 aa).

Residues Phe28, 62–64, and 86–88 each bind 5-amino-6-(D-ribitylamino)uracil; these read ALE and AVI. 91–92 is a binding site for (2S)-2-hydroxy-3-oxobutyl phosphate; sequence ET. The active-site Proton donor is His94. Position 119 (Asn119) interacts with 5-amino-6-(D-ribitylamino)uracil. Arg133 contacts (2S)-2-hydroxy-3-oxobutyl phosphate.

The protein belongs to the DMRL synthase family.

The catalysed reaction is (2S)-2-hydroxy-3-oxobutyl phosphate + 5-amino-6-(D-ribitylamino)uracil = 6,7-dimethyl-8-(1-D-ribityl)lumazine + phosphate + 2 H2O + H(+). It functions in the pathway cofactor biosynthesis; riboflavin biosynthesis; riboflavin from 2-hydroxy-3-oxobutyl phosphate and 5-amino-6-(D-ribitylamino)uracil: step 1/2. In terms of biological role, catalyzes the formation of 6,7-dimethyl-8-ribityllumazine by condensation of 5-amino-6-(D-ribitylamino)uracil with 3,4-dihydroxy-2-butanone 4-phosphate. This is the penultimate step in the biosynthesis of riboflavin. The chain is 6,7-dimethyl-8-ribityllumazine synthase from Azoarcus sp. (strain BH72).